A 302-amino-acid polypeptide reads, in one-letter code: Acetaldehyde dehydrogenase (302 aa).

The active-site Acyl-thioester intermediate is Cys131. Residues 162–170 (SAGPGTRKN) and Asn273 each bind NAD(+).

It belongs to the acetaldehyde dehydrogenase family.

It catalyses the reaction acetaldehyde + NAD(+) + CoA = acetyl-CoA + NADH + H(+). The protein is Acetaldehyde dehydrogenase of Acidovorax sp. (strain JS42).